Consider the following 103-residue polypeptide: Small ribosomal subunit protein uS10 (103 aa).

This sequence belongs to the universal ribosomal protein uS10 family. In terms of assembly, part of the 30S ribosomal subunit.

Its function is as follows. Involved in the binding of tRNA to the ribosomes. The polypeptide is Small ribosomal subunit protein uS10 (Borrelia duttonii (strain Ly)).